The primary structure comprises 216 residues: Uracil phosphoribosyltransferase (216 aa).

5-phospho-alpha-D-ribose 1-diphosphate contacts are provided by residues arginine 85, arginine 110, and 135–143; that span reads DPMVATGYS. Residues isoleucine 200 and 205 to 207 contribute to the uracil site; that span reads GDA. Aspartate 206 serves as a coordination point for 5-phospho-alpha-D-ribose 1-diphosphate.

This sequence belongs to the UPRTase family. Requires Mg(2+) as cofactor.

The enzyme catalyses UMP + diphosphate = 5-phospho-alpha-D-ribose 1-diphosphate + uracil. Its pathway is pyrimidine metabolism; UMP biosynthesis via salvage pathway; UMP from uracil: step 1/1. Allosterically activated by GTP. Catalyzes the conversion of uracil and 5-phospho-alpha-D-ribose 1-diphosphate (PRPP) to UMP and diphosphate. The polypeptide is Uracil phosphoribosyltransferase (Burkholderia pseudomallei (strain 668)).